The sequence spans 401 residues: Argininosuccinate synthase (401 aa).

Residues 10–18 (AYSGGVDTS) and Ala-38 each bind ATP. Tyr-89 contributes to the L-citrulline binding site. ATP is bound at residue Gly-119. Residues Thr-121, Asn-125, and Asp-126 each contribute to the L-aspartate site. Asn-125 contributes to the L-citrulline binding site. L-citrulline-binding residues include Arg-129, Ser-177, Ser-186, Glu-262, and Tyr-274.

Belongs to the argininosuccinate synthase family. Type 1 subfamily. Homotetramer.

Its subcellular location is the cytoplasm. The catalysed reaction is L-citrulline + L-aspartate + ATP = 2-(N(omega)-L-arginino)succinate + AMP + diphosphate + H(+). It participates in amino-acid biosynthesis; L-arginine biosynthesis; L-arginine from L-ornithine and carbamoyl phosphate: step 2/3. In Synechococcus sp. (strain CC9311), this protein is Argininosuccinate synthase.